Reading from the N-terminus, the 346-residue chain is NADH-ubiquinone oxidoreductase chain 2 (346 aa).

A run of 10 helical transmembrane segments spans residues 25-45, 60-80, 95-115, 124-144, 149-169, 178-195, 200-219, 247-267, 274-294, and 326-346; these read HWVL…PLIS, FLTQ…NAWA, CLLL…HFWF, LMTA…LLLM, LNPA…GWMG, ILAF…IILV, LALL…FMAL, VLLS…WLII, EMTP…FFYL, and AILA…HAIV.

It belongs to the complex I subunit 2 family.

It is found in the mitochondrion inner membrane. It carries out the reaction a ubiquinone + NADH + 5 H(+)(in) = a ubiquinol + NAD(+) + 4 H(+)(out). Functionally, core subunit of the mitochondrial membrane respiratory chain NADH dehydrogenase (Complex I) that is believed to belong to the minimal assembly required for catalysis. Complex I functions in the transfer of electrons from NADH to the respiratory chain. The immediate electron acceptor for the enzyme is believed to be ubiquinone. This is NADH-ubiquinone oxidoreductase chain 2 (MT-ND2) from Anas capensis (Cape teal).